A 124-amino-acid chain; its full sequence is Heat-labile enterotoxin B chain (124 aa).

A signal peptide spans 1 to 21; that stretch reads MNKVKFYVLFTALLSSLCAHG. A disulfide bond links Cys30 and Cys107.

In terms of assembly, heterohexamer of one A chain and of five B chains.

The biological activity of the toxin is produced by the A chain, which activates intracellular adenyl cyclase. In Escherichia coli, this protein is Heat-labile enterotoxin B chain (eltB).